The primary structure comprises 98 residues: Large ribosomal subunit protein uL23 (98 aa).

It belongs to the universal ribosomal protein uL23 family. Part of the 50S ribosomal subunit. Contacts protein L29, and trigger factor when it is bound to the ribosome.

In terms of biological role, one of the early assembly proteins it binds 23S rRNA. One of the proteins that surrounds the polypeptide exit tunnel on the outside of the ribosome. Forms the main docking site for trigger factor binding to the ribosome. In Acidothermus cellulolyticus (strain ATCC 43068 / DSM 8971 / 11B), this protein is Large ribosomal subunit protein uL23.